A 105-amino-acid polypeptide reads, in one-letter code: Molt-inhibiting hormone (105 aa).

Positions 1 to 28 are cleaved as a signal peptide; it reads MYRLAMRTWLAIVIVVVGTSLLFDTASA. Disulfide bonds link cysteine 35/cysteine 72, cysteine 52/cysteine 68, and cysteine 55/cysteine 81.

It belongs to the arthropod CHH/MIH/GIH/VIH hormone family. In terms of tissue distribution, produced by the medulla terminalis X-organ in the eyestalks and transported to the sinus gland where it is stored and released.

The protein localises to the secreted. Its function is as follows. Inhibits Y-organs where molting hormone (ecdysteroid) is secreted. A molting cycle is initiated when MIH secretion diminishes or stops. Has little or no hyperglycemic activity. The chain is Molt-inhibiting hormone from Penaeus japonicus (Kuruma prawn).